A 38-amino-acid chain; its full sequence is Very early lactation protein (38 aa).

As to quaternary structure, homodimer. O-glycosylated. Contains sialic acid residues. Found in the whey fraction of milk (at protein level).

The protein localises to the secreted. In Trichosurus vulpecula (Brush-tailed possum), this protein is Very early lactation protein.